The sequence spans 66 residues: Large ribosomal subunit protein bL28 (66 aa).

Positions 1–26 are disordered; sequence MAKDAITGARTRFGNQRSHALNSSRR. A compositionally biased stretch (polar residues) spans 13-25; the sequence is FGNQRSHALNSSR.

The protein belongs to the bacterial ribosomal protein bL28 family.

The sequence is that of Large ribosomal subunit protein bL28 from Leuconostoc citreum (strain KM20).